A 137-amino-acid polypeptide reads, in one-letter code: Histone H2B.1, sperm (137 aa).

The tract at residues 1–43 is disordered; the sequence is MPSQKSPTKRSPTKRSPQKGGKGAKRGGKAGKRRRGVAVKRRR. Short sequence motifs (SPKK motif) lie at residues 6–9, 11–14, and 16–19; these read SPTK and SPQK. Residues 7-43 are compositionally biased toward basic residues; the sequence is PTKRSPTKRSPQKGGKGAKRGGKAGKRRRGVAVKRRR. Residues S11 and S16 each carry the phosphoserine modification. O-linked (GlcNAc) serine glycosylation occurs at S124. Residue K132 forms a Glycyl lysine isopeptide (Lys-Gly) (interchain with G-Cter in ubiquitin) linkage.

Belongs to the histone H2B family. The nucleosome is a histone octamer containing two molecules each of H2A, H2B, H3 and H4 assembled in one H3-H4 heterotetramer and two H2A-H2B heterodimers. The octamer wraps approximately 147 bp of DNA. In terms of processing, monoubiquitination of Lys-132 gives a specific tag for epigenetic transcriptional activation and is also prerequisite for histone H3 'Lys-4' and 'Lys-79' methylation. Phosphorylated on SPKK motifs 2 and 3; which may regulate DNA binding. Dephosphorylated during maturation of spermatids to mature sperm and rephosphorylated at fertilization. Post-translationally, glcNAcylation at Ser-124 promotes monoubiquitination of Lys-132. It fluctuates in response to extracellular glucose, and associates with transcribed genes.

It localises to the nucleus. Its subcellular location is the chromosome. In terms of biological role, core component of nucleosome. Nucleosomes wrap and compact DNA into chromatin, limiting DNA accessibility to the cellular machineries which require DNA as a template. Histones thereby play a central role in transcription regulation, DNA repair, DNA replication and chromosomal stability. DNA accessibility is regulated via a complex set of post-translational modifications of histones, also called histone code, and nucleosome remodeling. The chain is Histone H2B.1, sperm from Psammechinus miliaris (Green sea urchin).